The chain runs to 221 residues: Large ribosomal subunit protein uL3 (221 aa).

Belongs to the universal ribosomal protein uL3 family. As to quaternary structure, part of the 50S ribosomal subunit. Forms a cluster with proteins L14 and L19.

One of the primary rRNA binding proteins, it binds directly near the 3'-end of the 23S rRNA, where it nucleates assembly of the 50S subunit. This Chlamydia trachomatis serovar A (strain ATCC VR-571B / DSM 19440 / HAR-13) protein is Large ribosomal subunit protein uL3.